We begin with the raw amino-acid sequence, 355 residues long: S-adenosylmethionine:tRNA ribosyltransferase-isomerase (355 aa).

This sequence belongs to the QueA family. Monomer.

The protein resides in the cytoplasm. It carries out the reaction 7-aminomethyl-7-carbaguanosine(34) in tRNA + S-adenosyl-L-methionine = epoxyqueuosine(34) in tRNA + adenine + L-methionine + 2 H(+). Its pathway is tRNA modification; tRNA-queuosine biosynthesis. Its function is as follows. Transfers and isomerizes the ribose moiety from AdoMet to the 7-aminomethyl group of 7-deazaguanine (preQ1-tRNA) to give epoxyqueuosine (oQ-tRNA). This chain is S-adenosylmethionine:tRNA ribosyltransferase-isomerase, found in Pectobacterium atrosepticum (strain SCRI 1043 / ATCC BAA-672) (Erwinia carotovora subsp. atroseptica).